Reading from the N-terminus, the 960-residue chain is Glycine dehydrogenase (decarboxylating) (960 aa).

Position 709 is an N6-(pyridoxal phosphate)lysine (Lys-709).

It belongs to the GcvP family. The glycine cleavage system is composed of four proteins: P, T, L and H. Pyridoxal 5'-phosphate is required as a cofactor.

The catalysed reaction is N(6)-[(R)-lipoyl]-L-lysyl-[glycine-cleavage complex H protein] + glycine + H(+) = N(6)-[(R)-S(8)-aminomethyldihydrolipoyl]-L-lysyl-[glycine-cleavage complex H protein] + CO2. Its function is as follows. The glycine cleavage system catalyzes the degradation of glycine. The P protein binds the alpha-amino group of glycine through its pyridoxal phosphate cofactor; CO(2) is released and the remaining methylamine moiety is then transferred to the lipoamide cofactor of the H protein. This Edwardsiella ictaluri (strain 93-146) protein is Glycine dehydrogenase (decarboxylating).